The following is a 219-amino-acid chain: Probable transaldolase (219 aa).

Lys-83 (schiff-base intermediate with substrate) is an active-site residue.

It belongs to the transaldolase family. Type 3B subfamily.

It localises to the cytoplasm. The catalysed reaction is D-sedoheptulose 7-phosphate + D-glyceraldehyde 3-phosphate = D-erythrose 4-phosphate + beta-D-fructose 6-phosphate. Its pathway is carbohydrate degradation; pentose phosphate pathway; D-glyceraldehyde 3-phosphate and beta-D-fructose 6-phosphate from D-ribose 5-phosphate and D-xylulose 5-phosphate (non-oxidative stage): step 2/3. In terms of biological role, transaldolase is important for the balance of metabolites in the pentose-phosphate pathway. In Cereibacter sphaeroides (strain ATCC 17029 / ATH 2.4.9) (Rhodobacter sphaeroides), this protein is Probable transaldolase.